A 323-amino-acid chain; its full sequence is 2-methylene-furan-3-one reductase (323 aa).

Residues lysine 59, 174–175 (GV), 197–200 (STKK), tyrosine 216, isoleucine 254, 265–267 (FVL), and 312–313 (RA) contribute to the NADP(+) site. Substrate is bound at residue lysine 59.

It belongs to the zinc-containing alcohol dehydrogenase family. Quinone oxidoreductase subfamily. Monomer. Post-translationally, the N-terminus is blocked. As to expression, expressed in parenchyma tissues of red fruits. Not found in vascular tissues. Also detected in the achenes.

The enzyme catalyses 4-hydroxy-2,5-dimethyl-furan-3(2H)-one + NADP(+) = 4-hydroxy-5-methyl-2-methylenefuran-3(2H)-one + NADPH + H(+). Functionally, enone oxidoreductase involved in the biosynthesis of 4-hydroxy-2,5-dimethyl-3(2H)-furanone (HDMF or furaneol), the key flavor compound in strawberries. Can use both NADH and NADPH as the electron donor. In Fragaria ananassa (Strawberry), this protein is 2-methylene-furan-3-one reductase (EO).